The sequence spans 320 residues: Short-chain dehydrogenase/reductase ATR7 (320 aa).

Residues S32, I34, Q55, D70, N93, K134, Y167, K171, and T202 each contribute to the NADP(+) site. Residue Y167 is the Proton acceptor of the active site. K171 (lowers pKa of active site Tyr) is an active-site residue.

Belongs to the short-chain dehydrogenases/reductases (SDR) family.

It participates in mycotoxin biosynthesis. Short-chain dehydrogenase/reductase; part of the core atranone cluster (CAC) which products are predicted to catalyze most or all steps of mycotoxin atranone synthesis, starting from geranylgeranyl pyrophosphate (GGPP). The initial cyclization of GGPP to dolabellane is probably performed by the terpene cyclase ATR13. The Baeyer-Villiger oxidation near the end of the atranone synthesis, which converts atranones D and E to atranones F and G is predicted to be catalyzed by the monooxygenase ATR8. Of the CAC's other predicted gene products, the reducing PKS ATR6 might synthesize a polyketide chain. This polyketide is probably transferred onto the atranone backbone by the polyketide transferase ATR5. Other predicted CAC products include 4 oxygenases (ATR2, ATR3, ATR4, and ATR14), 3 short-chain reductases (ATR7, ATR9, and ATR10), and a methyltransferase (ATR12). These may all be involved in the various steps of atranone biosynthesis, although their specific roles must await experimental determination. This Stachybotrys chlorohalonatus (strain IBT 40285) protein is Short-chain dehydrogenase/reductase ATR7.